Consider the following 879-residue polypeptide: Metabotropic glutamate receptor 3 (879 aa).

An N-terminal signal peptide occupies residues 1–22 (MKMLTRLQVLTLALFSKGFLLS). Residues 23-576 (LGDHNFLRRE…EDYIRWEDAW (554 aa)) lie on the Extracellular side of the membrane. Cys57 and Cys99 are disulfide-bonded. L-glutamate is bound by residues Ser151 and 172 to 174 (AST). A glycan (N-linked (GlcNAc...) asparagine) is linked at Asn209. Tyr222 contacts L-glutamate. 7 disulfide bridges follow: Cys240–Cys527, Cys361–Cys373, Cys412–Cys419, Cys509–Cys528, Cys513–Cys531, Cys534–Cys546, and Cys549–Cys562. Asn292 carries N-linked (GlcNAc...) asparagine glycosylation. Asp301 serves as a coordination point for L-glutamate. L-glutamate is bound at residue Lys389. N-linked (GlcNAc...) asparagine glycosylation is found at Asn414 and Asn439. Residues 577–599 (VIGPVTIACLGFMCTCMVVTVFI) traverse the membrane as a helical segment. Residues 600 to 613 (KHNNTPLVKASGRE) lie on the Cytoplasmic side of the membrane. A helical transmembrane segment spans residues 614 to 634 (LCYILLFGVGLSYCMTFFFIA). Topologically, residues 635-645 (KPSPVICALRR) are extracellular. A helical transmembrane segment spans residues 646 to 664 (LGLGSSFAICYSALLTKTN). Residues 665–688 (CIARIFDGVKNGAQRPKFISPSSQ) are Cytoplasmic-facing. The chain crosses the membrane as a helical span at residues 689–709 (VFICLGLILVQIVMVSVWLIL). The Extracellular portion of the chain corresponds to 710–734 (EAPGTRRYTLAEKRETVILKCNVKD). Residues 735 to 756 (SSMLISLTYDVILVILCTVYAF) traverse the membrane as a helical segment. Residues 757–769 (KTRKCPENFNEAK) are Cytoplasmic-facing. Residues 770–792 (FIGFTMYTTCIIWLAFLPIFYVT) form a helical membrane-spanning segment. Topologically, residues 793-802 (SSDYRVQTTT) are extracellular. Residues 803–828 (MCISVSLSGFVVLGCLFAPKVHIILF) traverse the membrane as a helical segment. Over 829-879 (QPQKNVVTHRLHLNRFSVSGTGTTYSQSSASTYVPTVCNGREVLDSTTSSL) the chain is Cytoplasmic.

The protein belongs to the G-protein coupled receptor 3 family. As to quaternary structure, interacts with TAMALIN.

Its subcellular location is the cell membrane. Its function is as follows. G-protein coupled receptor for glutamate. Ligand binding causes a conformation change that triggers signaling via guanine nucleotide-binding proteins (G proteins) and modulates the activity of down-stream effectors. Signaling inhibits adenylate cyclase activity. This is Metabotropic glutamate receptor 3 (GRM3) from Pongo abelii (Sumatran orangutan).